Here is an 872-residue protein sequence, read N- to C-terminus: Facilitated trehalose transporter Tret1 (872 aa).

Disordered regions lie at residues 1 to 40, 53 to 217, 262 to 281, and 293 to 315; these read MSGR…LKEK, VESN…KATS, SSSE…RKHQ, and KVLQ…KRLI. Over 1–406 the chain is Cytoplasmic; the sequence is MSGRDNRGAG…VYRPTTNPIY (406 aa). Residues 8–22 are compositionally biased toward gly residues; sequence GAGGGGGGGGGGSGG. Composition is skewed to low complexity over residues 55-68, 84-98, and 121-132; these read SNLS…SLDT, RHPQ…QQQR, and PPTQQQPQQQHQ. Ser262, Ser263, and Ser264 each carry phosphoserine. Ser334 and Ser336 each carry phosphoserine. Residues 340–361 form a disordered region; sequence FLTSRQHFQQQRSISTDSRKSR. Residues 344–355 are compositionally biased toward polar residues; it reads RQHFQQQRSIST. A helical transmembrane segment spans residues 407 to 427; the sequence is IWTQVLAALSVSLGSLVVGFV. Topologically, residues 428–454 are extracellular; that stretch reads SAYTSPALITMTNGNITSFEVTPQAAS. N-linked (GlcNAc...) asparagine glycosylation occurs at Asn442. Residues 455 to 475 form a helical membrane-spanning segment; that stretch reads WVGGIMPLAGLLGGIAGGPFI. At 476-488 the chain is on the cytoplasmic side; the sequence is EYLGRRNTILTTA. The helical transmembrane segment at 489–509 threads the bilayer; sequence VPFIVSSLLIACAVNITMVLL. At 510–511 the chain is on the extracellular side; that stretch reads GR. A helical transmembrane segment spans residues 512-532; it reads FLAGFCVGIASLSLPVYLGET. The Cytoplasmic segment spans residues 533–538; sequence VQPEVR. A helical membrane pass occupies residues 539 to 559; the sequence is GTLGLLPTAFGNIGILLCFVA. Residues 560–566 are Extracellular-facing; that stretch reads GTYMDWS. The chain crosses the membrane as a helical span at residues 567-587; sequence MLAFLGAALPVPFLILMFLIP. The Cytoplasmic segment spans residues 588-650; that stretch reads ETPRWYVSRG…ELLKRNNLKP (63 aa). Residues 651–671 traverse the membrane as a helical segment; it reads LSISLGLMFFQQLSGINAVIF. Over 672–687 the chain is Extracellular; that stretch reads YTVQIFKDAGSTIDGN. A helical transmembrane segment spans residues 688–708; it reads VCTIIVGIVNFMATFIGIILI. The Cytoplasmic segment spans residues 709–714; it reads DRAGRK. The helical transmembrane segment at 715-735 threads the bilayer; sequence ILLYVSNVAMIITLFVLGGFF. The Extracellular segment spans residues 736 to 755; sequence YCKDKAGIDVSNVGWLPLSC. The helical transmembrane segment at 756–776 threads the bilayer; the sequence is FVVYILGFSLGFGPIPWLMMG. Residues 777–784 lie on the Cytoplasmic side of the membrane; the sequence is EILPAKIR. The helical transmembrane segment at 785 to 803 threads the bilayer; it reads GSAASVATAFNWTCTFVVT. Residues 804–816 lie on the Extracellular side of the membrane; that stretch reads KTFQDMLDVIGSY. The chain crosses the membrane as a helical span at residues 817 to 837; the sequence is GAFWLFGAICFIGLFFVIIYV. Over 838–872 the chain is Cytoplasmic; sequence PETQGKTLEDIERKMMGRVRRMSSVANIKPLSFNM. A phosphoserine mark is found at Ser860 and Ser861.

It belongs to the major facilitator superfamily. Sugar transporter (TC 2.A.1.1) family. Trehalose transporter subfamily.

Its subcellular location is the cell membrane. Low-capacity facilitative transporter for trehalose. Does not transport maltose, sucrose or lactose. Mediates the bidirectional transfer of trehalose. Responsible for the transport of trehalose synthesized in the fat body and the incorporation of trehalose into other tissues that require a carbon source, thereby regulating trehalose levels in the hemolymph. The chain is Facilitated trehalose transporter Tret1 from Drosophila willistoni (Fruit fly).